A 76-amino-acid polypeptide reads, in one-letter code: Contulakin-G (76 aa).

The N-terminal stretch at 1–22 (MQTAYWVMVMMMVWIAAPLSEG) is a signal peptide. The propeptide occupies 23–50 (GKLNDVIRGLVPDDITPQLILGSLISRR). Gln51 bears the Pyrrolidone carboxylic acid mark. The interval 51-76 (QSEEGGSNATKKPYILRASDQVASGP) is disordered. An O-linked (GalNAc...) threonine glycan is attached at Thr60. Residues 67 to 76 (RASDQVASGP) constitute a propeptide that is removed on maturation.

Belongs to the conotoxin C superfamily. Post-translationally, O-glycosylated. The glycosylation seems to enhance the affinity to the neurotensin receptors. Expressed by the venom duct.

It is found in the secreted. Its function is as follows. Acts as an agonist of neurotensin receptors. It binds to human neurotensin type 1 receptor (NTSR1), rat neurotensin types 1 and 2 receptors (NTSR1/NTSR2) and mouse neurotensin type 3 receptor (SORT1). This Conus geographus (Geography cone) protein is Contulakin-G.